Reading from the N-terminus, the 238-residue chain is Ribonuclease 3 (238 aa).

The RNase III domain occupies 11 to 136 (RARLEAAIGY…LIAAIYLDGG (126 aa)). Glu49 lines the Mg(2+) pocket. Asp53 is a catalytic residue. 2 residues coordinate Mg(2+): Asp122 and Glu125. The active site involves Glu125. Residues 161-230 (DAKTELQEWA…AMKLLEREGV (70 aa)) form the DRBM domain. Residues 180 to 193 (YRTEDRSGPDHDPR) are compositionally biased toward basic and acidic residues. A disordered region spans residues 180–215 (YRTEDRSGPDHDPRFTVTVEVDGIDPETGVDRSKRG).

Belongs to the ribonuclease III family. In terms of assembly, homodimer. The cofactor is Mg(2+).

The protein localises to the cytoplasm. It carries out the reaction Endonucleolytic cleavage to 5'-phosphomonoester.. Functionally, digests double-stranded RNA. Involved in the processing of primary rRNA transcript to yield the immediate precursors to the large and small rRNAs (23S and 16S). Processes some mRNAs, and tRNAs when they are encoded in the rRNA operon. Processes pre-crRNA and tracrRNA of type II CRISPR loci if present in the organism. The protein is Ribonuclease 3 of Sinorhizobium medicae (strain WSM419) (Ensifer medicae).